The sequence spans 65 residues: uncharacterized protein (65 aa).

This is an uncharacterized protein from Homo sapiens (Human).